Reading from the N-terminus, the 117-residue chain is Large ribosomal subunit protein bL20 (117 aa).

Belongs to the bacterial ribosomal protein bL20 family.

Binds directly to 23S ribosomal RNA and is necessary for the in vitro assembly process of the 50S ribosomal subunit. It is not involved in the protein synthesizing functions of that subunit. This chain is Large ribosomal subunit protein bL20, found in Vibrio metschnikovii.